The chain runs to 575 residues: Interleukin-1 receptor-like 2 (575 aa).

An N-terminal signal peptide occupies residues 1-19 (MWSLLLCGLSIALPLSVTA). Ig-like C2-type domains are found at residues 20 to 111 (DGCK…VNLT), 126 to 211 (PNLS…VLNG), and 222 to 318 (YGGS…MCHA). Topologically, residues 20-335 (DGCKDIFMKN…ILQLPAPDFR (316 aa)) are extracellular. 9 N-linked (GlcNAc...) asparagine glycosylation sites follow: N41, N59, N109, N127, N184, N234, N250, N266, and N299. A disulfide bond links C42 and C95. C146 and C195 are joined by a disulfide. Residues C249 and C316 are joined by a disulfide bond. The helical transmembrane segment at 336-356 (AYLIGGLIALVAVAVSVVYIY) threads the bilayer. The Cytoplasmic portion of the chain corresponds to 357–575 (NIFKIDIVLW…RRKKCTLTTG (219 aa)). The region spanning 381-536 (KLYDAYVLYP…KFWKTVRYHM (156 aa)) is the TIR domain. Residue E467 is part of the active site.

Belongs to the interleukin-1 receptor family. Interacts with IL1RAP; the association is enhanced by IL36B indicative for an functional signaling complex and inhibited by IL36RN. Expressed in synovial fibroblasts and articular chondrocytes. Expressed in keratinocytes and monocyte-derived dendritic cells. Expressed in monocytes and myeloid dendritic cells; at protein level.

The protein localises to the membrane. The catalysed reaction is NAD(+) + H2O = ADP-D-ribose + nicotinamide + H(+). Receptor for interleukin-36 (IL36A, IL36B and IL36G). After binding to interleukin-36 associates with the coreceptor IL1RAP to form the interleukin-36 receptor complex which mediates interleukin-36-dependent activation of NF-kappa-B, MAPK and other pathways. The IL-36 signaling system is thought to be present in epithelial barriers and to take part in local inflammatory response; it is similar to the IL-1 system. Seems to be involved in skin inflammatory response by induction of the IL-23/IL-17/IL-22 pathway. This Homo sapiens (Human) protein is Interleukin-1 receptor-like 2 (IL1RL2).